The chain runs to 312 residues: Methionyl-tRNA formyltransferase (312 aa).

109 to 112 (SLLP) is a (6S)-5,6,7,8-tetrahydrofolate binding site.

This sequence belongs to the Fmt family.

It carries out the reaction L-methionyl-tRNA(fMet) + (6R)-10-formyltetrahydrofolate = N-formyl-L-methionyl-tRNA(fMet) + (6S)-5,6,7,8-tetrahydrofolate + H(+). In terms of biological role, attaches a formyl group to the free amino group of methionyl-tRNA(fMet). The formyl group appears to play a dual role in the initiator identity of N-formylmethionyl-tRNA by promoting its recognition by IF2 and preventing the misappropriation of this tRNA by the elongation apparatus. The protein is Methionyl-tRNA formyltransferase of Listeria welshimeri serovar 6b (strain ATCC 35897 / DSM 20650 / CCUG 15529 / CIP 8149 / NCTC 11857 / SLCC 5334 / V8).